Consider the following 234-residue polypeptide: UPF0502 protein BTH_II0990 (234 aa).

This sequence belongs to the UPF0502 family.

The polypeptide is UPF0502 protein BTH_II0990 (Burkholderia thailandensis (strain ATCC 700388 / DSM 13276 / CCUG 48851 / CIP 106301 / E264)).